Here is a 504-residue protein sequence, read N- to C-terminus: ATP-dependent rRNA helicase RRP3 (504 aa).

A compositionally biased stretch (low complexity) spans 34–62 (ASASSAASTKESLPVSETISISTSETPVS). The interval 34 to 99 (ASASSAASTK…SSSSPPSVQS (66 aa)) is disordered. Over residues 68 to 79 (SNKEDLSTKKDQ) the composition is skewed to basic and acidic residues. Positions 80-99 (SSASSSSSTSSSSSPPSVQS) are enriched in low complexity. The short motif at 98–126 (QSFTEFDLVPELLESIQSLKYTQPTPIQA) is the Q motif element. The Helicase ATP-binding domain occupies 129-301 (IPHALQGKDI…RSLNSPVQVE (173 aa)). 142–149 (AETGSGKT) is a binding site for ATP. The short motif at 248–251 (DEVD) is the DEAD box element. One can recognise a Helicase C-terminal domain in the interval 327–471 (RLIQIVNLDS…DLPLDEMQGL (145 aa)).

The protein belongs to the DEAD box helicase family. DDX47/RRP3 subfamily. Interacts with the SSU processome.

Its subcellular location is the nucleus. It carries out the reaction ATP + H2O = ADP + phosphate + H(+). Functionally, ATP-dependent rRNA helicase required for pre-ribosomal RNA processing. Involved in the maturation of the 35S-pre-rRNA and to its cleavage to mature 18S rRNA. This Lodderomyces elongisporus (strain ATCC 11503 / CBS 2605 / JCM 1781 / NBRC 1676 / NRRL YB-4239) (Yeast) protein is ATP-dependent rRNA helicase RRP3.